Consider the following 852-residue polypeptide: Pentatricopeptide repeat-containing protein At5g02830, chloroplastic (852 aa).

Residues Met-1–Tyr-25 constitute a chloroplast transit peptide. Residues Pro-17–Ser-60 are disordered. Residues Leu-44–Ser-58 are compositionally biased toward low complexity. PPR repeat units follow at residues Asp-334–Met-364, Asp-373–Pro-407, Asn-408–Pro-442, Asn-443–Glu-477, Thr-525–Pro-557, Asn-558–Pro-592, Asp-593–Pro-627, and Asn-628–Pro-665.

It belongs to the PPR family. P subfamily.

It localises to the plastid. The protein resides in the chloroplast. This Arabidopsis thaliana (Mouse-ear cress) protein is Pentatricopeptide repeat-containing protein At5g02830, chloroplastic.